A 356-amino-acid polypeptide reads, in one-letter code: Stomatin-like protein 2, mitochondrial (356 aa).

Residues 1 to 28 (MLARAARGTGALLLRGSLLASGRAPRRA) constitute a mitochondrion transit peptide. Ser17 bears the Phosphoserine; by PKC/PRKCZ mark. A Phosphotyrosine modification is found at Tyr124. At Lys145 the chain carries N6-acetyllysine; alternate. The residue at position 145 (Lys145) is an N6-succinyllysine; alternate. Residues 215 to 252 (INVAEGKKQAQILASEAEKAEQINQAAGEASAVLAKAK) are a coiled coil. Lys233 is modified (N6-acetyllysine). The segment at 321-356 (KAPVPGTPDSLSSGSSRDVQGTDASLDEELDRVKMS) is disordered. Thr327 is modified (phosphothreonine). Polar residues predominate over residues 329-343 (DSLSSGSSRDVQGTD). Ser330 is subject to Phosphoserine.

It belongs to the band 7/mec-2 family. As to quaternary structure, forms homooligomers. Interacts with MFN2; may form heterooligomers. Interacts with CACNA2D2. Interacts with PHB1 and PHB2; recruits them to cardiolipin-enriched mitochondrial membranes and stabilizes them. Hyperphosphorylated at Ser-17 in some patients with monoclonal gammopathy of undetermined significance (MGUS), multiple myeloma (MM) and Waldenstrom macroglobulinemia due to impaired dephosphorylation by PP2A. In terms of tissue distribution, ubiquitously expressed at low levels. Expressed in lymphoid tissues (at protein level).

It is found in the cell membrane. It localises to the mitochondrion. The protein resides in the mitochondrion inner membrane. The protein localises to the mitochondrion intermembrane space. Its subcellular location is the membrane raft. It is found in the cytoplasm. It localises to the cytoskeleton. Mitochondrial protein that probably regulates the biogenesis and the activity of mitochondria. Stimulates cardiolipin biosynthesis, binds cardiolipin-enriched membranes where it recruits and stabilizes some proteins including prohibitin and may therefore act in the organization of functional microdomains in mitochondrial membranes. Through regulation of the mitochondrial function may play a role into several biological processes including cell migration, cell proliferation, T-cell activation, calcium homeostasis and cellular response to stress. May play a role in calcium homeostasis through negative regulation of calcium efflux from mitochondria. Required for mitochondrial hyperfusion a pro-survival cellular response to stress which results in increased ATP production by mitochondria. May also regulate the organization of functional domains at the plasma membrane and play a role in T-cell activation through association with the T-cell receptor signaling complex and its regulation. The chain is Stomatin-like protein 2, mitochondrial (STOML2) from Homo sapiens (Human).